The sequence spans 179 residues: Archaemetzincin (179 aa).

Position 128 (His-128) interacts with Zn(2+). Glu-129 functions as the Proton acceptor in the catalytic mechanism. Zn(2+) is bound by residues His-132, His-138, Cys-139, Cys-144, Cys-163, and Cys-166.

This sequence belongs to the peptidase M54 family. As to quaternary structure, monomer. Zn(2+) serves as cofactor.

In terms of biological role, probable zinc metalloprotease whose natural substrate is unknown. This is Archaemetzincin from Methanocaldococcus jannaschii (strain ATCC 43067 / DSM 2661 / JAL-1 / JCM 10045 / NBRC 100440) (Methanococcus jannaschii).